A 455-amino-acid chain; its full sequence is Bifunctional protein GlmU (455 aa).

The pyrophosphorylase stretch occupies residues 1 to 226; it reads MGLSVVILAA…EFEILGVNDR (226 aa). UDP-N-acetyl-alpha-D-glucosamine-binding positions include 8 to 11, Lys-22, Gln-73, 78 to 79, 99 to 101, Gly-136, Glu-151, Asn-166, and Asn-224; these read LAAG, GT, and YGD. Mg(2+) is bound at residue Asp-101. Mg(2+) is bound at residue Asn-224. Residues 227–247 are linker; that stretch reads TQLASLERVWQRNVAEKIMAK. Positions 248-455 are N-acetyltransferase; it reads GVSIADPNRF…WQRPVKKTDK (208 aa). UDP-N-acetyl-alpha-D-glucosamine is bound by residues Arg-330 and Lys-348. The Proton acceptor role is filled by His-360. Residues Tyr-363 and Asn-374 each coordinate UDP-N-acetyl-alpha-D-glucosamine. Residues Ala-377, 383–384, Ser-402, Ala-420, and Arg-437 each bind acetyl-CoA; that span reads NY.

It in the N-terminal section; belongs to the N-acetylglucosamine-1-phosphate uridyltransferase family. This sequence in the C-terminal section; belongs to the transferase hexapeptide repeat family. In terms of assembly, homotrimer. Mg(2+) serves as cofactor.

It is found in the cytoplasm. The catalysed reaction is alpha-D-glucosamine 1-phosphate + acetyl-CoA = N-acetyl-alpha-D-glucosamine 1-phosphate + CoA + H(+). The enzyme catalyses N-acetyl-alpha-D-glucosamine 1-phosphate + UTP + H(+) = UDP-N-acetyl-alpha-D-glucosamine + diphosphate. It functions in the pathway nucleotide-sugar biosynthesis; UDP-N-acetyl-alpha-D-glucosamine biosynthesis; N-acetyl-alpha-D-glucosamine 1-phosphate from alpha-D-glucosamine 6-phosphate (route II): step 2/2. The protein operates within nucleotide-sugar biosynthesis; UDP-N-acetyl-alpha-D-glucosamine biosynthesis; UDP-N-acetyl-alpha-D-glucosamine from N-acetyl-alpha-D-glucosamine 1-phosphate: step 1/1. Its pathway is bacterial outer membrane biogenesis; LPS lipid A biosynthesis. Catalyzes the last two sequential reactions in the de novo biosynthetic pathway for UDP-N-acetylglucosamine (UDP-GlcNAc). The C-terminal domain catalyzes the transfer of acetyl group from acetyl coenzyme A to glucosamine-1-phosphate (GlcN-1-P) to produce N-acetylglucosamine-1-phosphate (GlcNAc-1-P), which is converted into UDP-GlcNAc by the transfer of uridine 5-monophosphate (from uridine 5-triphosphate), a reaction catalyzed by the N-terminal domain. The sequence is that of Bifunctional protein GlmU from Francisella tularensis subsp. novicida (strain U112).